The chain runs to 495 residues: uncharacterized protein (495 aa).

The TRAM domain maps to 16–74 (SSKRGDLIELAVTALDEDGNGIGTHDGTNVHVIGALPDERVRARLTHVGKRHLHAEAVE). Cysteine 88, cysteine 94, cysteine 97, and cysteine 175 together coordinate [4Fe-4S] cluster. S-adenosyl-L-methionine is bound by residues glutamine 299, tyrosine 328, glutamate 349, and asparagine 397. Cysteine 424 serves as the catalytic Nucleophile. Residues 472–483 (DRLESPAKERSR) are compositionally biased toward basic and acidic residues. The disordered stretch occupies residues 472 to 495 (DRLESPAKERSRPRASHKAKGGAV). Over residues 484 to 495 (PRASHKAKGGAV) the composition is skewed to basic residues.

It belongs to the class I-like SAM-binding methyltransferase superfamily. RNA M5U methyltransferase family.

This is an uncharacterized protein from Geobacter sulfurreducens (strain ATCC 51573 / DSM 12127 / PCA).